A 766-amino-acid polypeptide reads, in one-letter code: Protein sak1 (766 aa).

The segment at residues 101–176 is a DNA-binding region (RFX-type winged-helix); that stretch reads GICWLKRACE…YHYCGIKLRG (76 aa). 3 positions are modified to phosphoserine: S223, S224, and S227. Disordered regions lie at residues 271-308 and 708-731; these read PQAH…QPTY and LQEH…QQQQ. A compositionally biased stretch (polar residues) spans 279–289; the sequence is HLSQSNVPPQL. 2 stretches are compositionally biased toward low complexity: residues 290–308 and 715–731; these read SHSS…QPTY and QQHF…QQQQ.

Belongs to the RFX family.

It is found in the nucleus. Positively regulates cyclic AMP-dependent protein kinase-mediated exit from the mitotic cell cycle. This Schizosaccharomyces pombe (strain 972 / ATCC 24843) (Fission yeast) protein is Protein sak1 (sak1).